We begin with the raw amino-acid sequence, 1313 residues long: Envelopment polyprotein (1313 aa).

The N-terminal stretch at 1-17 is a signal peptide; it reads MIFTILNVLTRAMLVMS. Residues 18-712 are Lumenal-facing; the sequence is MYSLTTWDST…HSTLSAILTS (695 aa). Residues Asn-76 and Asn-102 are each glycosylated (N-linked (GlcNAc...) asparagine; by host). The stretch at 178-237 forms a coiled coil; the sequence is MQVLMSEIEQLKNQLSKKRNERGQEKRDAEKVMSDLMARNSDLRKHNDILTAEISQMKNK. An internal signal sequence for glycoprotein N region spans residues 250–270; sequence TVVPAILSVALLSSSVAPIIA. Intrachain disulfides connect Cys-303–Cys-312, Cys-352–Cys-362, Cys-373–Cys-404, Cys-394–Cys-407, Cys-432–Cys-579, Cys-450–Cys-460, Cys-501–Cys-557, Cys-525–Cys-536, Cys-543–Cys-548, Cys-602–Cys-605, Cys-609–Cys-679, and Cys-629–Cys-634. Asn-496 carries N-linked (GlcNAc...) asparagine; by host glycosylation. The helical transmembrane segment at 713-733 threads the bilayer; the sequence is FLLILFIYTVFSVTTNILYVL. Positions 731–773 are golgi retention signal; it reads YVLRLIPKQLKSPVGWLKLFINWLLTALRIKTRNVMRRINQRI. The Cytoplasmic portion of the chain corresponds to 734–791; sequence RLIPKQLKSPVGWLKLFINWLLTALRIKTRNVMRRINQRIGWVDHHDVERPRHREPMR. An important for correct targeting of the glycoproteins to the Golgi complex but not for heterodimerization region spans residues 769–773; that stretch reads INQRI. Positions 793–809 are internal signal sequence for glycoprotein C; it reads FKTTLLLTLIMMTGGNA. Disulfide bonds link Cys-810–Cys-850, Cys-823–Cys-832, Cys-875–Cys-971, Cys-890–Cys-1084, Cys-896–Cys-944, Cys-902–Cys-951, Cys-907–Cys-933, Cys-937–Cys-942, Cys-1053–Cys-1066, Cys-1148–Cys-1220, Cys-1158–Cys-1161, and Cys-1168–Cys-1202. Over 810-1278 the chain is Lumenal; the sequence is CSNTVVANSK…LDWLGGPMKA (469 aa). The interval 896 to 902 is fusion loop; it reads CHLVGDC. Residues 938–949 form a fusion loop region; it reads GAIGCGCFNINP. N-linked (GlcNAc...) asparagine; by host glycosylation occurs at Asn-1154. Asn-1243 carries an N-linked (GlcNAc...) asparagine; by host glycan. The helical transmembrane segment at 1279–1299 threads the bilayer; sequence ILKILGFIAIGIVCFVLFMIL. The Cytoplasmic portion of the chain corresponds to 1300-1313; the sequence is IRIAVNSINIKKKN.

Belongs to the phlebovirus envelope glycoprotein family. Heterodimer with glycoprotein C. Interacts with nucleocapsid protein N and with the polymerase L in order to package them into virus particles. In terms of assembly, heterodimer with glycoprotein C. Homotrimer (postfusion). Interacts with nucleocapsid protein N and with the polymerase L in order to package them into virus particles. Interacts with host E3 ubiquitin-protein ligase UBR4; this interaction is important for viral RNA production. Post-translationally, specific enzymatic cleavages in vivo yield mature proteins including NSm protein, Glycoprotein C, and Glycoprotein N. In terms of processing, glycosylated. The glycans can attach to host CD209/DC-SIGN, and may play a role in virus entry into dendritic cells. Palmitoylated.

The protein localises to the virion membrane. The protein resides in the host Golgi apparatus membrane. It is found in the host endoplasmic reticulum membrane. Structural component of the virion that interacts with glycoprotein C. It shields the hydrophobic fusion loops of the glycoprotein C, preventing premature fusion. The glycoprotein protrusions are arranged on an icosahedral lattice, with T=12 triangulation. They are able to attach the virion to the host cell receptor CD209/DC-SIGN and to promote fusion of membranes with the late endosome after endocytosis of the virion. Plays a role in the packaging of ribonucleoproteins and polymerase during virus assembly. Its function is as follows. Structural component of the virion that interacts with glycoprotein N. Acts as a class II fusion protein that is activated upon acidification and subsequent repositioning of the glycoprotein N. The glycoprotein protrusions are arranged on an icosahedral lattice, with T=12 triangulation. They are able to attach the virion to the host cell receptor CD209/DC-SIGN and to promote fusion of membranes with the late endosome after endocytosis of the virion. Functionally, plays a role for virus dissemination in mosquitoes. In Homo sapiens (Human), this protein is Envelopment polyprotein (GP).